The primary structure comprises 1203 residues: uncharacterized protein (1203 aa).

This is an uncharacterized protein from Magallana gigas (Pacific oyster).